A 142-amino-acid polypeptide reads, in one-letter code: Hemoglobin subunit zeta (142 aa).

Position 2 is an N-acetylserine (serine 2). Positions 2–142 constitute a Globin domain; it reads SLTKAERTMV…VSSVLTEKYR (141 aa). A Phosphoserine modification is found at serine 53. Position 59 (histidine 59) interacts with heme b. Serine 73 is modified (phosphoserine). Histidine 88 provides a ligand contact to heme b.

It belongs to the globin family. Heterotetramer of two zeta chains and beta-type chains.

The zeta chain is an alpha-type chain of mammalian embryonic hemoglobin. This is Hemoglobin subunit zeta (HBZ1) from Equus caballus (Horse).